Here is a 1332-residue protein sequence, read N- to C-terminus: DNA-directed RNA polymerase subunit beta' (1332 aa).

Zn(2+) contacts are provided by Cys60, Cys62, Cys75, and Cys78. 3 residues coordinate Mg(2+): Asp535, Asp537, and Asp539. Cys894, Cys977, Cys984, and Cys987 together coordinate Zn(2+).

It belongs to the RNA polymerase beta' chain family. As to quaternary structure, the RNAP catalytic core consists of 2 alpha, 1 beta, 1 beta' and 1 omega subunit. When a sigma factor is associated with the core the holoenzyme is formed, which can initiate transcription. Mg(2+) is required as a cofactor. Requires Zn(2+) as cofactor.

The catalysed reaction is RNA(n) + a ribonucleoside 5'-triphosphate = RNA(n+1) + diphosphate. Functionally, DNA-dependent RNA polymerase catalyzes the transcription of DNA into RNA using the four ribonucleoside triphosphates as substrates. This chain is DNA-directed RNA polymerase subunit beta', found in Corynebacterium kroppenstedtii (strain DSM 44385 / JCM 11950 / CIP 105744 / CCUG 35717).